The primary structure comprises 753 residues: 5-methyltetrahydropteroyltriglutamate--homocysteine methyltransferase (753 aa).

Residues 17–20 and Lys-117 each bind 5-methyltetrahydropteroyltri-L-glutamate; that span reads RELK. L-homocysteine is bound by residues 431-433 and Glu-484; that span reads IGS. L-methionine is bound by residues 431–433 and Glu-484; that span reads IGS. Residues 515–516 and Trp-561 contribute to the 5-methyltetrahydropteroyltri-L-glutamate site; that span reads RC. Residue Asp-599 participates in L-homocysteine binding. Residue Asp-599 coordinates L-methionine. Glu-605 serves as a coordination point for 5-methyltetrahydropteroyltri-L-glutamate. Zn(2+)-binding residues include His-641, Cys-643, and Glu-665. The active-site Proton donor is the His-694. A Zn(2+)-binding site is contributed by Cys-726.

The protein belongs to the vitamin-B12 independent methionine synthase family. The cofactor is Zn(2+).

The enzyme catalyses 5-methyltetrahydropteroyltri-L-glutamate + L-homocysteine = tetrahydropteroyltri-L-glutamate + L-methionine. It participates in amino-acid biosynthesis; L-methionine biosynthesis via de novo pathway; L-methionine from L-homocysteine (MetE route): step 1/1. Catalyzes the transfer of a methyl group from 5-methyltetrahydrofolate to homocysteine resulting in methionine formation. This is 5-methyltetrahydropteroyltriglutamate--homocysteine methyltransferase from Citrobacter koseri (strain ATCC BAA-895 / CDC 4225-83 / SGSC4696).